Reading from the N-terminus, the 364-residue chain is Lipid-A-disaccharide synthase (364 aa).

The protein belongs to the LpxB family.

It carries out the reaction a lipid X + a UDP-2-N,3-O-bis[(3R)-3-hydroxyacyl]-alpha-D-glucosamine = a lipid A disaccharide + UDP + H(+). It participates in bacterial outer membrane biogenesis; LPS lipid A biosynthesis. In terms of biological role, condensation of UDP-2,3-diacylglucosamine and 2,3-diacylglucosamine-1-phosphate to form lipid A disaccharide, a precursor of lipid A, a phosphorylated glycolipid that anchors the lipopolysaccharide to the outer membrane of the cell. This Campylobacter jejuni (strain RM1221) protein is Lipid-A-disaccharide synthase.